A 222-amino-acid chain; its full sequence is Interleukin-12 subunit alpha (222 aa).

The first 25 residues, 1-25, serve as a signal peptide directing secretion; that stretch reads MCPPRGLLLVTILVLLNHLDHLSLA. 3 disulfide bridges follow: cysteine 40–cysteine 113, cysteine 67–cysteine 199, and cysteine 88–cysteine 126. Residues asparagine 42, asparagine 96, asparagine 110, and asparagine 183 are each glycosylated (N-linked (GlcNAc...) asparagine).

The protein belongs to the IL-6 superfamily. Heterodimer with IL12B; disulfide-linked. This heterodimer is known as interleukin IL-12. Heterodimer with EBI3/IL27B; not disulfide-linked. This heterodimer is known as interleukin IL-35. Interacts with NBR1; this interaction promotes IL-12 secretion.

The protein localises to the secreted. Heterodimerizes with IL12B to form the IL-12 cytokine or with EBI3/IL27B to form the IL-35 cytokine. IL-12 is primarily produced by professional antigen-presenting cells (APCs) such as B-cells and dendritic cells (DCs) as well as macrophages and granulocytes and regulates T-cell and natural killer-cell responses, induces the production of interferon-gamma (IFN-gamma), favors the differentiation of T-helper 1 (Th1) cells and is an important link between innate resistance and adaptive immunity. Mechanistically, exerts its biological effects through a receptor composed of IL12R1 and IL12R2 subunits. Binding to the receptor results in the rapid tyrosine phosphorylation of a number of cellular substrates including the JAK family kinases TYK2 and JAK2. In turn, recruited STAT4 gets phosphorylated and translocates to the nucleus where it regulates cytokine/growth factor responsive genes. As part of IL-35, plays essential roles in maintaining the immune homeostasis of the liver microenvironment and also functions as an immune-suppressive cytokine. Mediates biological events through unconventional receptors composed of IL12RB2 and gp130/IL6ST heterodimers or homodimers. Signaling requires the transcription factors STAT1 and STAT4, which form a unique heterodimer that binds to distinct DNA sites. The polypeptide is Interleukin-12 subunit alpha (IL12A) (Felis catus (Cat)).